The sequence spans 143 residues: Class I hydrophobin 20 (143 aa).

Positions 1–22 are cleaved as a signal peptide; it reads MLSHPMKLLFFVFALSALLAAA. Intrachain disulfides connect Cys-54/Cys-123, Cys-62/Cys-117, Cys-63/Cys-102, and Cys-124/Cys-137.

It belongs to the fungal hydrophobin family. As to quaternary structure, self-assembles to form functional amyloid fibrils called rodlets. Self-assembly into fibrillar rodlets occurs spontaneously at hydrophobic:hydrophilic interfaces and the rodlets further associate laterally to form amphipathic monolayers.

It is found in the secreted. The protein localises to the cell wall. Aerial growth, conidiation, and dispersal of filamentous fungi in the environment rely upon a capability of their secreting small amphipathic proteins called hydrophobins (HPBs) with low sequence identity. Class I can self-assemble into an outermost layer of rodlet bundles on aerial cell surfaces, conferring cellular hydrophobicity that supports fungal growth, development and dispersal; whereas Class II form highly ordered films at water-air interfaces through intermolecular interactions but contribute nothing to the rodlet structure. Hydph20 is a class I hydrophobin involved in mycelial growth. This is Class I hydrophobin 20 from Pleurotus ostreatus (strain PC15) (Oyster mushroom).